Reading from the N-terminus, the 83-residue chain is Conotoxin VnMKLT1-022 (83 aa).

Residues methionine 1–alanine 22 form the signal peptide. Residues aspartate 23–asparagine 55 constitute a propeptide that is removed on maturation. Disulfide bonds link cysteine 59/cysteine 74, cysteine 66/cysteine 78, and cysteine 73/cysteine 82.

It belongs to the conotoxin O1 superfamily. Expressed by the venom duct.

It is found in the secreted. The chain is Conotoxin VnMKLT1-022 from Conus ventricosus (Mediterranean cone).